The following is a 266-amino-acid chain: Type III pantothenate kinase (266 aa).

D6–V13 is an ATP binding site. Substrate-binding positions include Y100 and G107 to R110. D109 functions as the Proton acceptor in the catalytic mechanism. D129 serves as a coordination point for K(+). T132 contacts ATP. A substrate-binding site is contributed by T184.

Belongs to the type III pantothenate kinase family. Homodimer. The cofactor is NH4(+). K(+) is required as a cofactor.

Its subcellular location is the cytoplasm. The enzyme catalyses (R)-pantothenate + ATP = (R)-4'-phosphopantothenate + ADP + H(+). It participates in cofactor biosynthesis; coenzyme A biosynthesis; CoA from (R)-pantothenate: step 1/5. Functionally, catalyzes the phosphorylation of pantothenate (Pan), the first step in CoA biosynthesis. This chain is Type III pantothenate kinase, found in Clostridium beijerinckii (strain ATCC 51743 / NCIMB 8052) (Clostridium acetobutylicum).